We begin with the raw amino-acid sequence, 467 residues long: ATP synthase subunit beta (467 aa).

Position 150–157 (150–157) interacts with ATP; that stretch reads GGAGVGKT.

The protein belongs to the ATPase alpha/beta chains family. F-type ATPases have 2 components, CF(1) - the catalytic core - and CF(0) - the membrane proton channel. CF(1) has five subunits: alpha(3), beta(3), gamma(1), delta(1), epsilon(1). CF(0) has three main subunits: a(1), b(2) and c(9-12). The alpha and beta chains form an alternating ring which encloses part of the gamma chain. CF(1) is attached to CF(0) by a central stalk formed by the gamma and epsilon chains, while a peripheral stalk is formed by the delta and b chains.

It is found in the cell inner membrane. The enzyme catalyses ATP + H2O + 4 H(+)(in) = ADP + phosphate + 5 H(+)(out). Produces ATP from ADP in the presence of a proton gradient across the membrane. The catalytic sites are hosted primarily by the beta subunits. The protein is ATP synthase subunit beta of Vibrio alginolyticus.